A 288-amino-acid chain; its full sequence is Homoserine kinase (288 aa).

78 to 88 (PLARGLGSSSS) contacts ATP.

It belongs to the GHMP kinase family. Homoserine kinase subfamily.

It is found in the cytoplasm. It carries out the reaction L-homoserine + ATP = O-phospho-L-homoserine + ADP + H(+). The protein operates within amino-acid biosynthesis; L-threonine biosynthesis; L-threonine from L-aspartate: step 4/5. Its function is as follows. Catalyzes the ATP-dependent phosphorylation of L-homoserine to L-homoserine phosphate. The sequence is that of Homoserine kinase from Streptococcus agalactiae serotype V (strain ATCC BAA-611 / 2603 V/R).